The primary structure comprises 718 residues: uncharacterized protein (718 aa).

6 helical membrane passes run 9-29 (VIST…IWFF), 60-80 (NVFF…LHIG), 83-103 (IQYI…GAVG), 136-156 (VMIL…YLFF), 391-411 (IVVF…GYWI), and 506-526 (LLDT…LWPD).

It belongs to the YccS/YhfK family.

The protein resides in the cell membrane. This is an uncharacterized protein from Haemophilus influenzae (strain ATCC 51907 / DSM 11121 / KW20 / Rd).